A 203-amino-acid polypeptide reads, in one-letter code: Thymidylate kinase (203 aa).

14–21 lines the ATP pocket; sequence GGEGIGKS.

Belongs to the thymidylate kinase family.

It carries out the reaction dTMP + ATP = dTDP + ADP. In terms of biological role, phosphorylation of dTMP to form dTDP in both de novo and salvage pathways of dTTP synthesis. The sequence is that of Thymidylate kinase from Rickettsia rickettsii (strain Iowa).